The sequence spans 382 residues: Alkanesulfonate monooxygenase (382 aa).

Belongs to the SsuD family.

The catalysed reaction is an alkanesulfonate + FMNH2 + O2 = an aldehyde + FMN + sulfite + H2O + 2 H(+). In terms of biological role, catalyzes the desulfonation of aliphatic sulfonates. This chain is Alkanesulfonate monooxygenase, found in Pseudomonas putida (strain GB-1).